The sequence spans 401 residues: Nodal homolog 3-B (401 aa).

The signal sequence occupies residues 1–18 (MALLNLFFCLVFSSPLMA). The propeptide occupies 19 to 274 (MPPVLQGRKS…KVNGFRRLRR (256 aa)). Asparagine 168, asparagine 337, asparagine 341, and asparagine 344 each carry an N-linked (GlcNAc...) asparagine glycan. Intrachain disulfides connect cysteine 299–cysteine 365 and cysteine 328–cysteine 396.

This sequence belongs to the TGF-beta family. As to quaternary structure, monomer. The propeptide region interacts with bmp4 in a non-covalent manner. As to expression, expressed in the dorsal marginal region of late blastula, becoming restricted to the dorsal blastopore lip (Spemann organizer) at the early gastrula stage.

Its subcellular location is the secreted. Exhibits mesoderm-dorsalizing activity and neural-inducing activity, but lacks mesoderm-inducing activity. Regulates the expression of specific mesodermal and neural genes. Induces convergent extension movements at the embryonic midline by activating the fgf signaling pathway to induce t/bra expression in the organizer region. Acts with wnt11 to induce Spemann organizer cells and induce axis formation. The unprocessed protein antagonizes bmp-signaling. The protein is Nodal homolog 3-B (nodal3-b) of Xenopus laevis (African clawed frog).